We begin with the raw amino-acid sequence, 1331 residues long: Lysine-specific demethylase 3A-A (1331 aa).

Disordered stretches follow at residues 243 to 280 (LNDK…PSKD), 358 to 381 (TPPQ…TQNL), and 497 to 532 (KVVK…VTYP). Basic and acidic residues predominate over residues 266–280 (TELKQTRNEEVPSKD). The C6-type zinc-finger motif lies at 683–708 (CDACDTTIFNLHWVCPKCGFGVCVDC). The LXXLL motif signature appears at 894 to 898 (LRNLL). The JmjC domain maps to 1086–1291 (RREGKLNLAA…HCFWLTQEFR (206 aa)). The Fe cation site is built by H1130, D1132, and H1259.

Belongs to the JHDM2 histone demethylase family. The cofactor is Fe(2+).

It localises to the cytoplasm. Its subcellular location is the nucleus. It carries out the reaction N(6),N(6)-dimethyl-L-lysyl(9)-[histone H3] + 2 2-oxoglutarate + 2 O2 = L-lysyl(9)-[histone H3] + 2 formaldehyde + 2 succinate + 2 CO2. In terms of biological role, histone demethylase that specifically demethylates 'Lys-9' of histone H3, thereby playing a central role in histone code. Preferentially demethylates mono- and dimethylated H3 'Lys-9' residue, with a preference for dimethylated residue, while it has weak or no activity on trimethylated H3 'Lys-9'. Demethylation of Lys residue generates formaldehyde and succinate. This Xenopus laevis (African clawed frog) protein is Lysine-specific demethylase 3A-A (kdm3a-a).